Here is a 367-residue protein sequence, read N- to C-terminus: Peptide chain release factor 2 (367 aa).

N5-methylglutamine is present on Gln-250.

Belongs to the prokaryotic/mitochondrial release factor family. Methylated by PrmC. Methylation increases the termination efficiency of RF2.

It is found in the cytoplasm. Functionally, peptide chain release factor 2 directs the termination of translation in response to the peptide chain termination codons UGA and UAA. In Kineococcus radiotolerans (strain ATCC BAA-149 / DSM 14245 / SRS30216), this protein is Peptide chain release factor 2.